Here is a 542-residue protein sequence, read N- to C-terminus: Importin subunit alpha (542 aa).

Position 1 is an N-acetylmethionine (methionine 1). Positions 1-11 (MDNGTDSSTSK) are enriched in polar residues. The IBB domain maps to 1 to 65 (MDNGTDSSTS…RNFIPPTDGA (65 aa)). Residues 1-77 (MDNGTDSSTS…DEEDESSVSA (77 aa)) form a disordered region. The segment covering 27–53 (FSADELRRRRDTQQVELRKAKRDEALA) has biased composition (basic and acidic residues). The stretch at 89–122 (LPQMTQQLNSDDMQEQLSATVKFRQILSREHRPP) is one ARM 1; truncated repeat. ARM repeat units follow at residues 123 to 162 (IDVV…ASGT), 163 to 204 (SAQT…AGDS), 205 to 251 (TDYR…PQPD), 252 to 288 (WSVV…SDGP), 289 to 330 (QEAI…VTGN), 331 to 372 (DLQT…TAGN), 373 to 417 (TEQI…GLQR), and 418 to 471 (PDII…LNIN). The tract at residues 209–335 (DYVLQCNAME…IVTGNDLQTQ (127 aa)) is NLS binding site 1. Positions 419–505 (DIIRYLVSQG…KIYEKAYKII (87 aa)) are NLS binding site 2. Residues 472–508 (ENADFIEKAGGMEKIFNCQQNENDKIYEKAYKIIETY) form an ARM 10; atypical repeat.

It belongs to the importin alpha family. As to quaternary structure, forms a complex with an importin beta subunit. In the nucleus, interacts with NUP2 which accelerate release of NLSs, NUP2 is subsequently displaced by CSE1:RanGTP which mediates re-export and recycling. Interacts with HEH2, SHE2, and STS1.

It localises to the cytoplasm. It is found in the perinuclear region. Its function is as follows. Functions in nuclear protein import as an adapter protein for importin beta nuclear receptors. Binds specifically and directly to substrates containing either a simple or bipartite NLS motif. Promotes docking of import substrates to the nuclear envelope. Together with importin beta KAP95, mediates nuclear import of transcription factor GCN4. Together with tethering factor STS1, targets the proteasome to the nucleus. The sequence is that of Importin subunit alpha (SRP1) from Saccharomyces cerevisiae (strain ATCC 204508 / S288c) (Baker's yeast).